The chain runs to 347 residues: Holliday junction branch migration complex subunit RuvB (347 aa).

A large ATPase domain (RuvB-L) region spans residues 1–186 (MKDENSINFL…FGITARFELY (186 aa)). ATP-binding positions include Leu-25, Arg-26, Gly-67, Lys-70, Thr-71, Thr-72, 133–135 (EDY), Arg-176, Tyr-186, and Arg-223. A Mg(2+)-binding site is contributed by Thr-71. The tract at residues 187-257 (SEIELVEIIK…IVSIGLEMLR (71 aa)) is small ATPAse domain (RuvB-S). Residues 260–347 (GEGLDEQDRN…DISENQRVSF (88 aa)) are head domain (RuvB-H). DNA contacts are provided by Arg-315 and Arg-320.

Belongs to the RuvB family. Homohexamer. Forms an RuvA(8)-RuvB(12)-Holliday junction (HJ) complex. HJ DNA is sandwiched between 2 RuvA tetramers; dsDNA enters through RuvA and exits via RuvB. An RuvB hexamer assembles on each DNA strand where it exits the tetramer. Each RuvB hexamer is contacted by two RuvA subunits (via domain III) on 2 adjacent RuvB subunits; this complex drives branch migration. In the full resolvosome a probable DNA-RuvA(4)-RuvB(12)-RuvC(2) complex forms which resolves the HJ.

It localises to the cytoplasm. It carries out the reaction ATP + H2O = ADP + phosphate + H(+). Its function is as follows. The RuvA-RuvB-RuvC complex processes Holliday junction (HJ) DNA during genetic recombination and DNA repair, while the RuvA-RuvB complex plays an important role in the rescue of blocked DNA replication forks via replication fork reversal (RFR). RuvA specifically binds to HJ cruciform DNA, conferring on it an open structure. The RuvB hexamer acts as an ATP-dependent pump, pulling dsDNA into and through the RuvAB complex. RuvB forms 2 homohexamers on either side of HJ DNA bound by 1 or 2 RuvA tetramers; 4 subunits per hexamer contact DNA at a time. Coordinated motions by a converter formed by DNA-disengaged RuvB subunits stimulates ATP hydrolysis and nucleotide exchange. Immobilization of the converter enables RuvB to convert the ATP-contained energy into a lever motion, pulling 2 nucleotides of DNA out of the RuvA tetramer per ATP hydrolyzed, thus driving DNA branch migration. The RuvB motors rotate together with the DNA substrate, which together with the progressing nucleotide cycle form the mechanistic basis for DNA recombination by continuous HJ branch migration. Branch migration allows RuvC to scan DNA until it finds its consensus sequence, where it cleaves and resolves cruciform DNA. The polypeptide is Holliday junction branch migration complex subunit RuvB (Borrelia garinii subsp. bavariensis (strain ATCC BAA-2496 / DSM 23469 / PBi) (Borreliella bavariensis)).